The sequence spans 398 residues: Tryptophan synthase beta chain (398 aa).

At Lys-88 the chain carries N6-(pyridoxal phosphate)lysine.

It belongs to the TrpB family. In terms of assembly, tetramer of two alpha and two beta chains. Pyridoxal 5'-phosphate serves as cofactor.

The catalysed reaction is (1S,2R)-1-C-(indol-3-yl)glycerol 3-phosphate + L-serine = D-glyceraldehyde 3-phosphate + L-tryptophan + H2O. It functions in the pathway amino-acid biosynthesis; L-tryptophan biosynthesis; L-tryptophan from chorismate: step 5/5. Functionally, the beta subunit is responsible for the synthesis of L-tryptophan from indole and L-serine. This is Tryptophan synthase beta chain from Histophilus somni (strain 2336) (Haemophilus somnus).